The sequence spans 533 residues: NAD(P)H-quinone oxidoreductase chain 4 (533 aa).

15 consecutive transmembrane segments (helical) span residues 5 to 25 (VPWLSLSILVPIVGALLVPLV), 36 to 56 (WYALIVTLITFLITVAAYLTG), 70 to 90 (VSWLPDLGLTWAVGADGLSMP), 91 to 111 (LILLTSFITSLACLAAWPVSF), 115 to 135 (LFYFLLLAMDGGQIAVFAVQD), 137 to 157 (LLFFLAWELELIPVYLLLAIW), 169 to 189 (FILYTAGSSLFILLAALAMGF), 210 to 230 (GFQLLCYAGLLIAFGVKLPIV), 244 to 264 (TAPVHMLLAGILLKMGGYALL), 278 to 298 (FAPLLIVLGVVNIIYAALTSF), 315 to 335 (MGFVLIGVGSFSALGTSGAML), 336 to 356 (QMISHGLIGASLFFLVGATYD), 377 to 397 (FALWTVCALASLALPGMSGFV), 418 to 438 (VVICGLAAVGVILTPIYLLSM), and 465 to 485 (VYIIGCLLVPIIGIGLYPKLM).

This sequence belongs to the complex I subunit 4 family.

The protein localises to the cellular thylakoid membrane. The enzyme catalyses a plastoquinone + NADH + (n+1) H(+)(in) = a plastoquinol + NAD(+) + n H(+)(out). It catalyses the reaction a plastoquinone + NADPH + (n+1) H(+)(in) = a plastoquinol + NADP(+) + n H(+)(out). NDH-1 shuttles electrons from NAD(P)H, via FMN and iron-sulfur (Fe-S) centers, to quinones in the respiratory chain. The immediate electron acceptor for the enzyme in this species is believed to be plastoquinone. Couples the redox reaction to proton translocation (for every two electrons transferred, four hydrogen ions are translocated across the cytoplasmic membrane), and thus conserves the redox energy in a proton gradient. The chain is NAD(P)H-quinone oxidoreductase chain 4 from Synechococcus sp. (strain CC9605).